The sequence spans 572 residues: 2-isopropylmalate synthase (572 aa).

Residues 31-305 enclose the Pyruvate carboxyltransferase domain; the sequence is PIWMSTDLRD…DPGLDFSNIN (275 aa). Positions 40, 244, 246, and 280 each coordinate Mg(2+). A regulatory domain region spans residues 437-572; it reads NATPVHYVGH…MNDATESVGV (136 aa).

This sequence belongs to the alpha-IPM synthase/homocitrate synthase family. LeuA type 2 subfamily. In terms of assembly, homodimer. Requires Mg(2+) as cofactor.

It localises to the cytoplasm. It catalyses the reaction 3-methyl-2-oxobutanoate + acetyl-CoA + H2O = (2S)-2-isopropylmalate + CoA + H(+). It participates in amino-acid biosynthesis; L-leucine biosynthesis; L-leucine from 3-methyl-2-oxobutanoate: step 1/4. Catalyzes the condensation of the acetyl group of acetyl-CoA with 3-methyl-2-oxobutanoate (2-ketoisovalerate) to form 3-carboxy-3-hydroxy-4-methylpentanoate (2-isopropylmalate). This is 2-isopropylmalate synthase from Paraburkholderia xenovorans (strain LB400).